Here is a 358-residue protein sequence, read N- to C-terminus: Methionine aminopeptidase 2 (358 aa).

His109 lines the substrate pocket. Asp130, Asp141, and His210 together coordinate a divalent metal cation. His218 lines the substrate pocket. A divalent metal cation is bound by residues Glu243 and Glu339.

It belongs to the peptidase M24A family. Methionine aminopeptidase eukaryotic type 2 subfamily. Co(2+) serves as cofactor. The cofactor is Zn(2+). Mn(2+) is required as a cofactor. Requires Fe(2+) as cofactor.

The protein localises to the cytoplasm. It catalyses the reaction Release of N-terminal amino acids, preferentially methionine, from peptides and arylamides.. Irreversibly inhibited by the fungal metabolite fumagillin and the fumagillin analog TNP470, antiangiogenic drugs. Cotranslationally removes the N-terminal methionine from nascent proteins. The N-terminal methionine is often cleaved when the second residue in the primary sequence is small and uncharged (Met-Ala-, Cys, Gly, Pro, Ser, Thr, or Val). In Encephalitozoon hellem (strain ATCC 50504) (Microsporidian parasite), this protein is Methionine aminopeptidase 2.